A 304-amino-acid polypeptide reads, in one-letter code: N-acetylmuramic acid 6-phosphate etherase (304 aa).

One can recognise an SIS domain in the interval 58–221 (IAERIHRGGR…STGVMIKLGK (164 aa)). E86 serves as the catalytic Proton donor. E117 is an active-site residue.

It belongs to the GCKR-like family. MurNAc-6-P etherase subfamily. As to quaternary structure, homodimer.

The enzyme catalyses N-acetyl-D-muramate 6-phosphate + H2O = N-acetyl-D-glucosamine 6-phosphate + (R)-lactate. It functions in the pathway amino-sugar metabolism; N-acetylmuramate degradation. Its function is as follows. Specifically catalyzes the cleavage of the D-lactyl ether substituent of MurNAc 6-phosphate, producing GlcNAc 6-phosphate and D-lactate. In Clostridium beijerinckii (strain ATCC 51743 / NCIMB 8052) (Clostridium acetobutylicum), this protein is N-acetylmuramic acid 6-phosphate etherase.